The primary structure comprises 318 residues: Pheromone-regulated membrane protein 5 (318 aa).

A helical transmembrane segment spans residues 75–98 (GTVFIVVGGIAGVIFLAILLWWVI). Position 129 is a phosphoserine (Ser129). Residues 238-247 (TISSSSASSL) are compositionally biased toward low complexity. Residues 238-318 (TISSSSASSL…HMLEGKEQDE (81 aa)) are disordered. Positions 250-261 (GNEKEVGEDIRK) are enriched in basic and acidic residues. Positions 276 to 285 (SPESDGSVNR) are enriched in polar residues. Ser279, Ser282, and Ser288 each carry phosphoserine. The segment covering 309 to 318 (HMLEGKEQDE) has biased composition (basic and acidic residues). Lys314 is covalently cross-linked (Glycyl lysine isopeptide (Lys-Gly) (interchain with G-Cter in ubiquitin)).

Belongs to the PRM5 family.

The protein resides in the membrane. This chain is Pheromone-regulated membrane protein 5 (PRM5), found in Saccharomyces cerevisiae (strain ATCC 204508 / S288c) (Baker's yeast).